The following is a 224-amino-acid chain: UPF0758 protein Psyr_0222 (224 aa).

Residues 102–224 (ALENPTQVRS…PLSMVERGLM (123 aa)) form the MPN domain. Residues H173, H175, and D186 each contribute to the Zn(2+) site. A JAMM motif motif is present at residues 173–186 (HNHPSGITTPSRSD).

This sequence belongs to the UPF0758 family.

In Pseudomonas syringae pv. syringae (strain B728a), this protein is UPF0758 protein Psyr_0222.